The following is a 326-amino-acid chain: Ficolin-1 (326 aa).

An N-terminal signal peptide occupies residues 1 to 29 (MELSGATMARGLAVLLVLFLHIKNLPAQA). The Collagen-like domain maps to 55 to 93 (GLPGAPGPKGEAGVIGERGERGLPGAPGKAGPVGPKGDR). The tract at residues 72-111 (RGERGLPGAPGKAGPVGPKGDRGEKGMRGEKGDAGQSQSC) is disordered. Low complexity predominate over residues 77 to 89 (LPGAPGKAGPVGP). Basic and acidic residues predominate over residues 90–104 (KGDRGEKGMRGEKGD). The Fibrinogen C-terminal domain occupies 109–326 (QSCATGPRNC…KVSEMKVRPA (218 aa)). 2 disulfides stabilise this stretch: cysteine 111–cysteine 139 and cysteine 118–cysteine 146. The a domain; contributes to trimerization stretch occupies residues 115 to 154 (PRNCKDLLDRGYFLSGWHTIYLPDCRPLTVLCDMDTDGGG). The tract at residues 155 to 243 (WTVFQRRMDG…LVLGAFVGGS (89 aa)) is b domain; contributes to trimerization. Aspartate 262, aspartate 264, serine 266, and serine 268 together coordinate Ca(2+). A disulfide bond links cysteine 270 and cysteine 283. Residue 282–284 (DCH) participates in a carbohydrate binding. Residue asparagine 305 is glycosylated (N-linked (GlcNAc...) asparagine). The tract at residues 317–326 (KVSEMKVRPA) is p domain.

This sequence belongs to the ficolin lectin family. As to quaternary structure, homotrimer. Interacts with elastin/ELN. Interacts (via Fibrinogen C-terminal domain) with FFAR2. Interacts with CRP; may regulate monocyte activation by FCN1. In terms of tissue distribution, peripheral blood leukocytes, monocytes and granulocytes. Also detected in spleen, lung, and thymus, may be due to the presence of tissue macrophages or trapped blood in these tissues. Not detected on lymphocytes.

It is found in the secreted. Its subcellular location is the cell membrane. In terms of biological role, extracellular lectin functioning as a pattern-recognition receptor in innate immunity. Binds the sugar moieties of pathogen-associated molecular patterns (PAMPs) displayed on microbes and activates the lectin pathway of the complement system. May also activate monocytes through a G protein-coupled receptor, FFAR2, inducing the secretion of interleukin-8/IL-8. Binds preferentially to 9-O-acetylated 2-6-linked sialic acid derivatives and to various glycans containing sialic acid engaged in a 2-3 linkage. The chain is Ficolin-1 (FCN1) from Homo sapiens (Human).